The sequence spans 240 residues: tRNA (guanine-N(1)-)-methyltransferase (240 aa).

S-adenosyl-L-methionine is bound by residues G108 and 127 to 132; that span reads IGDYVL.

This sequence belongs to the RNA methyltransferase TrmD family. Homodimer.

It is found in the cytoplasm. The catalysed reaction is guanosine(37) in tRNA + S-adenosyl-L-methionine = N(1)-methylguanosine(37) in tRNA + S-adenosyl-L-homocysteine + H(+). Specifically methylates guanosine-37 in various tRNAs. The protein is tRNA (guanine-N(1)-)-methyltransferase of Lactobacillus johnsonii (strain CNCM I-12250 / La1 / NCC 533).